The following is a 38-amino-acid chain: Photosystem II reaction center protein L (38 aa).

A helical membrane pass occupies residues 17–37 (SLFWGLLLIFVLAVLFSSYFF).

The protein belongs to the PsbL family. PSII is composed of 1 copy each of membrane proteins PsbA, PsbB, PsbC, PsbD, PsbE, PsbF, PsbH, PsbI, PsbJ, PsbK, PsbL, PsbM, PsbT, PsbY, PsbZ, Psb30/Ycf12, at least 3 peripheral proteins of the oxygen-evolving complex and a large number of cofactors. It forms dimeric complexes.

It is found in the plastid. Its subcellular location is the chloroplast thylakoid membrane. One of the components of the core complex of photosystem II (PSII). PSII is a light-driven water:plastoquinone oxidoreductase that uses light energy to abstract electrons from H(2)O, generating O(2) and a proton gradient subsequently used for ATP formation. It consists of a core antenna complex that captures photons, and an electron transfer chain that converts photonic excitation into a charge separation. This subunit is found at the monomer-monomer interface and is required for correct PSII assembly and/or dimerization. The chain is Photosystem II reaction center protein L from Cyanidium caldarium (Red alga).